Reading from the N-terminus, the 355-residue chain is Trans-3-hydroxy-L-proline dehydratase (355 aa).

Cys111 serves as the catalytic Proton acceptor. Residues 112–113 (GH) and 276–277 (GS) contribute to the substrate site.

It belongs to the proline racemase family. In terms of assembly, homodimer.

The enzyme catalyses trans-3-hydroxy-L-proline = 1-pyrroline-2-carboxylate + H2O. Catalyzes the dehydration of trans-3-hydroxy-L-proline (t3LHyp) to Delta(1)-pyrroline-2-carboxylate (Pyr2C). Together with LhpI, is involved in a metabolic pathway that converts t3LHyp to L-proline. The protein is Trans-3-hydroxy-L-proline dehydratase of Colwellia psychrerythraea (strain 34H / ATCC BAA-681) (Vibrio psychroerythus).